Reading from the N-terminus, the 485-residue chain is MDPTALVEAIVEEVACPICMTFLREPMSIDCGHSFCHSCLSGLWEIPGESQNWGYTCPLCRAPVQPRNLRPNWQLANVVEKVRLLRLHPGMGLKGDLCERHGEKLKMFCKEDVLIMCEACSQSPEHEAHSVVPMEDVAWEYKWELHEALEHLKKEQEEAWKLEVGERKRTATWKIQVETRKQSIVWEFEKYQRLLEKKQPPHRQLGAEVAAALASLQREAAETMQKLELNHSELIQQSQVLWRMIAELKERSQRPVRWMLQDIQEVLNRSKSWSLQQPEPISLELKTDCRVLGLREILKTYAADVRLDPDTAYSRLIVSEDRKRVHYGDTNQKLPDNPERFYRYNIVLGSQCISSGRHYWEVEVGDRSEWGLGVCKQNVDRKEVVYLSPHYGFWVIRLRKGNEYRAGTDEYPILSLPVPPRRVGIFVDYEAHDISFYNVTDCGSHIFTFPRYPFPGRLLPYFSPCYSIGTNNTAPLAICSLDGED.

Residues 16 to 61 (CPICMTFLREPMSIDCGHSFCHSCLSGLWEIPGESQNWGYTCPLCR) form an RING-type zinc finger. The B box-type zinc-finger motif lies at 93–134 (LKGDLCERHGEKLKMFCKEDVLIMCEACSQSPEHEAHSVVPM). 4 residues coordinate Zn(2+): C98, H101, C120, and H126. Residues 207–239 (AEVAAALASLQREAAETMQKLELNHSELIQQSQ) are a coiled coil. The 197-residue stretch at 285–481 (LKTDCRVLGL…NTAPLAICSL (197 aa)) folds into the B30.2/SPRY domain.

Belongs to the TRIM/RBCC family. As to quaternary structure, interacts with AR/androgen receptor (via ligand-binding domain). Interacts with KAT5/TIP60. In terms of processing, auto-ubiquitinated. Widely expressed. Expressed at high levels in prostate cancer cell lines. Up-regulation could be restricted to androgen-dependent cells.

It is found in the cytoplasm. Its subcellular location is the perinuclear region. The protein localises to the nucleus. The enzyme catalyses S-ubiquitinyl-[E2 ubiquitin-conjugating enzyme]-L-cysteine + [acceptor protein]-L-lysine = [E2 ubiquitin-conjugating enzyme]-L-cysteine + N(6)-ubiquitinyl-[acceptor protein]-L-lysine.. It functions in the pathway protein modification; protein ubiquitination. Functions as a ubiquitin E3 ligase. Acts as a coactivator of androgen receptor (AR) depending on its ubiquitin ligase activity. The sequence is that of E3 ubiquitin-protein ligase TRIM68 (TRIM68) from Homo sapiens (Human).